Consider the following 141-residue polypeptide: UPF0179 protein Cmaq_1008 (141 aa).

The protein belongs to the UPF0179 family.

The chain is UPF0179 protein Cmaq_1008 from Caldivirga maquilingensis (strain ATCC 700844 / DSM 13496 / JCM 10307 / IC-167).